A 283-amino-acid chain; its full sequence is Dihydropteroate synthase (283 aa).

The Pterin-binding domain occupies 18 to 274 (PKIMGIVNLT…DVKATADALK (257 aa)). Asparagine 25 contributes to the Mg(2+) binding site. (7,8-dihydropterin-6-yl)methyl diphosphate is bound by residues threonine 66, aspartate 99, asparagine 119, aspartate 190, lysine 227, and 262 to 264 (RVH).

The protein belongs to the DHPS family. In terms of assembly, homodimer. Mg(2+) serves as cofactor.

The catalysed reaction is (7,8-dihydropterin-6-yl)methyl diphosphate + 4-aminobenzoate = 7,8-dihydropteroate + diphosphate. Its pathway is cofactor biosynthesis; tetrahydrofolate biosynthesis; 7,8-dihydrofolate from 2-amino-4-hydroxy-6-hydroxymethyl-7,8-dihydropteridine diphosphate and 4-aminobenzoate: step 1/2. In terms of biological role, catalyzes the condensation of para-aminobenzoate (pABA) with 6-hydroxymethyl-7,8-dihydropterin diphosphate (DHPt-PP) to form 7,8-dihydropteroate (H2Pte), the immediate precursor of folate derivatives. This is Dihydropteroate synthase (folP) from Neisseria meningitidis serogroup C.